The sequence spans 63 residues: DNA gyrase inhibitor YacG (63 aa).

Residues C9, C12, C28, and C32 each contribute to the Zn(2+) site.

Belongs to the DNA gyrase inhibitor YacG family. In terms of assembly, interacts with GyrB. Zn(2+) is required as a cofactor.

Functionally, inhibits all the catalytic activities of DNA gyrase by preventing its interaction with DNA. Acts by binding directly to the C-terminal domain of GyrB, which probably disrupts DNA binding by the gyrase. This chain is DNA gyrase inhibitor YacG, found in Salmonella paratyphi A (strain AKU_12601).